The sequence spans 97 residues: Large ribosomal subunit protein eL37 (97 aa).

At Lys-10 the chain carries N6-acetyllysine. Zn(2+) is bound by residues Cys-19, Cys-22, Cys-34, and Cys-37. The segment at 19 to 37 (CRRCGSKAYHLQKSTCGKC) adopts a C4-type zinc-finger fold. Phosphoserine is present on residues Ser-96 and Ser-97.

This sequence belongs to the eukaryotic ribosomal protein eL37 family. As to quaternary structure, component of the large ribosomal subunit.

The protein resides in the cytoplasm. In terms of biological role, component of the large ribosomal subunit. The ribosome is a large ribonucleoprotein complex responsible for the synthesis of proteins in the cell. The chain is Large ribosomal subunit protein eL37 (RPL37) from Bos taurus (Bovine).